The chain runs to 33 residues: DQDDDIENVITLIETKENQTEQIKXQXXQLLQD.

This is Unknown 31.6 kDa protein from 2D-PAGE from Onion yellows phytoplasma.